The chain runs to 315 residues: BTB/POZ domain-containing adapter for CUL3-mediated RhoA degradation protein 3 (315 aa).

Position 1 is an N-acetylmethionine (Met1). The residue at position 23 (Ser23) is a Phosphoserine. A BTB domain is found at Lys32–Glu100. The PCNA-binding signature appears at Gln239 to Pro245. Positions Asn269–Glu294 are disordered.

Belongs to the BACURD family. As to quaternary structure, homotetramer; forms a two-fold symmetric tetramer in solution. Interacts with CUL3; interaction is direct and forms a 5:5 heterodecamer. Component of the BCR(BACURD3) E3 ubiquitin ligase complex, at least composed of CUL3, KCTD10/BACURD3 and RBX1. Interacts with DNA polymerase delta subunit 2/POLD2. Interacts with PCNA. Associated with the tectonic-like complex (also named B9 complex); however as Kctd10 has not been identified in all tectonic-like complexes purifications it is unclear whether it is really part of the complex.

Its subcellular location is the nucleus. It functions in the pathway protein modification; protein ubiquitination. Substrate-specific adapter of a BCR (BTB-CUL3-RBX1) E3 ubiquitin-protein ligase complex. The BCR(BACURD3) E3 ubiquitin ligase complex mediates the ubiquitination of target proteins, leading to their degradation by the proteasome. This Mus musculus (Mouse) protein is BTB/POZ domain-containing adapter for CUL3-mediated RhoA degradation protein 3 (Kctd10).